A 554-amino-acid polypeptide reads, in one-letter code: DDB1- and CUL4-associated factor 11 homolog (554 aa).

The segment at 24 to 52 (QRMKNRNDSDTDFSDDDEETSGGCPKMTP) is disordered. The span at 33–43 (DTDFSDDDEET) shows a compositional bias: acidic residues. 5 WD repeats span residues 245-284 (QNQC…RIRT), 288-328 (AHED…DGDV), 336-375 (GHRD…CQGG), 414-458 (GHSV…VSRR), and 461-500 (GHQA…EGVI). The interval 527-554 (PQRKLRKPISARNAKCPTTSSEPDDFQI) is disordered.

It belongs to the WD repeat LEC14B family.

In terms of biological role, involved in regulation of lifespan. Required for dopaminergic CEP neuron degeneration in response to Mn(2+). In Caenorhabditis briggsae, this protein is DDB1- and CUL4-associated factor 11 homolog (wdr-23).